Reading from the N-terminus, the 403-residue chain is Imidazolonepropionase (403 aa).

Residues His-69 and His-71 each contribute to the Fe(3+) site. Positions 69 and 71 each coordinate Zn(2+). 4-imidazolone-5-propanoate is bound by residues Arg-78, Tyr-141, and His-174. An N-formimidoyl-L-glutamate-binding site is contributed by Tyr-141. Residue His-239 coordinates Fe(3+). A Zn(2+)-binding site is contributed by His-239. Residue Gln-242 participates in 4-imidazolone-5-propanoate binding. Residue Asp-314 participates in Fe(3+) binding. Residue Asp-314 coordinates Zn(2+). N-formimidoyl-L-glutamate contacts are provided by Asn-316 and Gly-318. Residue Ser-319 participates in 4-imidazolone-5-propanoate binding.

The protein belongs to the metallo-dependent hydrolases superfamily. HutI family. It depends on Zn(2+) as a cofactor. Requires Fe(3+) as cofactor.

The protein resides in the cytoplasm. The catalysed reaction is 4-imidazolone-5-propanoate + H2O = N-formimidoyl-L-glutamate. Its pathway is amino-acid degradation; L-histidine degradation into L-glutamate; N-formimidoyl-L-glutamate from L-histidine: step 3/3. Functionally, catalyzes the hydrolytic cleavage of the carbon-nitrogen bond in imidazolone-5-propanoate to yield N-formimidoyl-L-glutamate. It is the third step in the universal histidine degradation pathway. In Legionella pneumophila (strain Lens), this protein is Imidazolonepropionase.